We begin with the raw amino-acid sequence, 216 residues long: Probable GTP-binding protein EngB (216 aa).

Residues A24–E205 form the EngB-type G domain. GTP contacts are provided by residues G32–S39, G59–A63, D86–G89, T153–D156, and F184–A186. Mg(2+) contacts are provided by S39 and T61.

It belongs to the TRAFAC class TrmE-Era-EngA-EngB-Septin-like GTPase superfamily. EngB GTPase family. Requires Mg(2+) as cofactor.

Its function is as follows. Necessary for normal cell division and for the maintenance of normal septation. In Anaeromyxobacter dehalogenans (strain 2CP-C), this protein is Probable GTP-binding protein EngB.